The chain runs to 402 residues: 1-deoxy-D-xylulose 5-phosphate reductoisomerase (402 aa).

NADPH is bound by residues Thr21, Gly22, Ser23, Ile24, Gly47, Asn50, and Asn127. Lys128 is a binding site for 1-deoxy-D-xylulose 5-phosphate. An NADPH-binding site is contributed by Glu129. Mn(2+) is bound at residue Asp151. 1-deoxy-D-xylulose 5-phosphate contacts are provided by Ser152, Glu153, Ser177, and His200. Glu153 lines the Mn(2+) pocket. Gly206 is a binding site for NADPH. 1-deoxy-D-xylulose 5-phosphate contacts are provided by Ser213, Asn218, Lys219, and Glu222. Glu222 provides a ligand contact to Mn(2+).

This sequence belongs to the DXR family. Requires Mg(2+) as cofactor. The cofactor is Mn(2+).

It carries out the reaction 2-C-methyl-D-erythritol 4-phosphate + NADP(+) = 1-deoxy-D-xylulose 5-phosphate + NADPH + H(+). Its pathway is isoprenoid biosynthesis; isopentenyl diphosphate biosynthesis via DXP pathway; isopentenyl diphosphate from 1-deoxy-D-xylulose 5-phosphate: step 1/6. In terms of biological role, catalyzes the NADPH-dependent rearrangement and reduction of 1-deoxy-D-xylulose-5-phosphate (DXP) to 2-C-methyl-D-erythritol 4-phosphate (MEP). The polypeptide is 1-deoxy-D-xylulose 5-phosphate reductoisomerase (Mycobacterium ulcerans (strain Agy99)).